Reading from the N-terminus, the 1341-residue chain is Aldehyde oxidase 4 (1341 aa).

The 88-residue stretch at 8–95 (DELIFFVNGK…GAAVTTVEGV (88 aa)) folds into the 2Fe-2S ferredoxin-type domain. 4 residues coordinate [2Fe-2S] cluster: C47, C52, C55, and C77. Q116 serves as a coordination point for Mo-molybdopterin. [2Fe-2S] cluster is bound by residues C117, C120, C152, and C154. C154 is a binding site for Mo-molybdopterin. The 186-residue stretch at 239-424 (FQGERTTWLA…LSVFIPYSSQ (186 aa)) folds into the FAD-binding PCMH-type domain. FAD is bound by residues 267-274 (LIMGNTTV), A348, T357, H361, D370, and V414. Residues A805, 805–806 (AF), L1046, 1087–1090 (GSMG), Q1202, and L1266 contribute to the Mo-molybdopterin site. The active-site Proton acceptor; for azaheterocycle hydroxylase activity is E1268.

The protein belongs to the xanthine dehydrogenase family. Homodimer. The cofactor is [2Fe-2S] cluster. It depends on FAD as a cofactor. Requires Mo-molybdopterin as cofactor. Detected in liver, testis, kidney, brain, Harderian gland and olfactory mucosa.

The protein localises to the cytoplasm. It carries out the reaction an aldehyde + O2 + H2O = a carboxylate + H2O2 + H(+). The enzyme catalyses retinal + O2 + H2O = retinoate + H2O2 + H(+). Functionally, aldehyde oxidase able to catalyze the oxidation of retinaldehyde into retinoate. Acts as a negative modulator of the epidermal trophism. May be able to oxidize a wide variety of aldehydes into their corresponding carboxylates and to hydroxylate azaheterocycles. The sequence is that of Aldehyde oxidase 4 (AOX4) from Cavia porcellus (Guinea pig).